The following is a 446-amino-acid chain: Transcriptional adapter 2-alpha (446 aa).

The segment at 12–69 adopts a ZZ-type zinc-finger fold; that stretch reads FDKPPCRGCSSYLTEPYVKCAECGPPPFLLCLQCFTRGFEYKKHQSDHTYEIMTSDFP. 8 residues coordinate Zn(2+): Cys17, Cys20, Cys31, Cys34, Cys42, Cys45, His55, and His59. Positions 70–122 constitute an SANT domain; the sequence is VLDPNWTAQEEMALLEAVMDCGFGNWQDVANQMCTKSKEECEKHYMKHFINNP. The segment at 345-375 is disordered; sequence DIDSGPTPAAPIPSNSGRRSAPPLNLTGLPG. One can recognise an SWIRM domain in the interval 359–446; it reads NSGRRSAPPL…LIREGYITKA (88 aa). The DNA-binding element occupies 429 to 438; sequence KTRKIYDFLI.

It localises to the nucleus. Its subcellular location is the chromosome. Functionally, component of some complex with histone acetyltransferase activity. Required for the function of some acidic activation domains, which activate transcription from a distant site. Binds double-stranded DNA. Binds dinucleosomes, probably at the linker region between neighboring nucleosomes. Plays a role in chromatin remodeling. The sequence is that of Transcriptional adapter 2-alpha (TADA2A) from Gallus gallus (Chicken).